Reading from the N-terminus, the 430-residue chain is Glutamate-1-semialdehyde 2,1-aminomutase 2 (430 aa).

An N6-(pyridoxal phosphate)lysine modification is found at K269.

This sequence belongs to the class-III pyridoxal-phosphate-dependent aminotransferase family. HemL subfamily. In terms of assembly, homodimer. Pyridoxal 5'-phosphate is required as a cofactor.

The protein resides in the cytoplasm. It catalyses the reaction (S)-4-amino-5-oxopentanoate = 5-aminolevulinate. Its pathway is porphyrin-containing compound metabolism; protoporphyrin-IX biosynthesis; 5-aminolevulinate from L-glutamyl-tRNA(Glu): step 2/2. The polypeptide is Glutamate-1-semialdehyde 2,1-aminomutase 2 (Bacillus pumilus (strain SAFR-032)).